Reading from the N-terminus, the 259-residue chain is MNTAVVTNAAPKIAVKNLNFFYGKFHALRDISLEIPEHKVTAFIGPSGCGKSTLLRVFNRMFELYPEQRAEGEILLDGENLLTSKKDVALLRAKVGMVFQKPTPFPMSIFDNIAFGVKLFESLNTTDLEERVEWALRKAALWGEVKDKLTQSGSSLSGGQQQRLCIARGIAIKPEVLLLDEPCSALDPISTGKIEELITELKSDYTVVIVTHNMQQAARCSDYTAYMYLGDLMEFGATEQIFFKPTRKETEDYITGRFG.

Residues 13 to 254 (IAVKNLNFFY…PTRKETEDYI (242 aa)) form the ABC transporter domain. Position 45–52 (45–52 (GPSGCGKS)) interacts with ATP.

This sequence belongs to the ABC transporter superfamily. Phosphate importer (TC 3.A.1.7) family. The complex is composed of two ATP-binding proteins (PstB), two transmembrane proteins (PstC and PstA) and a solute-binding protein (PstS).

The protein resides in the cell inner membrane. It catalyses the reaction phosphate(out) + ATP + H2O = ADP + 2 phosphate(in) + H(+). Functionally, part of the ABC transporter complex PstSACB involved in phosphate import. Responsible for energy coupling to the transport system. In Albidiferax ferrireducens (strain ATCC BAA-621 / DSM 15236 / T118) (Rhodoferax ferrireducens), this protein is Phosphate import ATP-binding protein PstB.